Here is a 116-residue protein sequence, read N- to C-terminus: Large ribosomal subunit protein bL19 (116 aa).

It belongs to the bacterial ribosomal protein bL19 family.

This protein is located at the 30S-50S ribosomal subunit interface and may play a role in the structure and function of the aminoacyl-tRNA binding site. This Clostridium beijerinckii (strain ATCC 51743 / NCIMB 8052) (Clostridium acetobutylicum) protein is Large ribosomal subunit protein bL19.